The following is a 667-amino-acid chain: E3 ubiquitin-protein ligase RNF6 (667 aa).

7 disordered regions span residues 1 to 25 (MDPS…RRWQ), 75 to 100 (KEQL…RAHS), 116 to 216 (GNVT…QGSF), 295 to 355 (FSSR…TPLS), 396 to 419 (ETRD…STVE), 507 to 532 (GDAA…GAEM), and 537 to 556 (EPAP…QLGR). The span at 79 to 90 (ASQPGSDSAASD) shows a compositional bias: low complexity. Residues 116–139 (GNVTRSGQNGNQSWRAVSRTNPNS) are compositionally biased toward polar residues. A compositionally biased stretch (basic and acidic residues) spans 150–163 (INPDNRGSEMHGED). Low complexity predominate over residues 191 to 200 (SQTSMSSSGP). The span at 296-327 (SSRSRSPIQRQNGTVHHNSQRQGRPVQQTGRN) shows a compositional bias: polar residues. A compositionally biased stretch (low complexity) spans 516-530 (HGRASSQASQAQDGA). Ser559 bears the Phosphoserine mark. The segment at 614 to 655 (CSVCISDYVAGNKLRQLPCLHEFHIHCIDRWLSENCTCPVCR) adopts an RING-type; atypical zinc-finger fold.

The protein belongs to the RNF12 family. In terms of tissue distribution, widely expressed with higher expression in the testis in both germ cells and Sertoli cells.

It is found in the nucleus. It localises to the cytoplasm. The protein localises to the cell projection. Its subcellular location is the axon. The protein resides in the PML body. It catalyses the reaction S-ubiquitinyl-[E2 ubiquitin-conjugating enzyme]-L-cysteine + [acceptor protein]-L-lysine = [E2 ubiquitin-conjugating enzyme]-L-cysteine + N(6)-ubiquitinyl-[acceptor protein]-L-lysine.. It participates in protein modification; protein ubiquitination. In terms of biological role, E3 ubiquitin-protein ligase mediating 'Lys-48'-linked polyubiquitination of LIMK1 and its subsequent targeting to the proteasome for degradation. Negatively regulates axonal outgrowth through regulation of the LIMK1 turnover. Mediates 'Lys-6' and 'Lys-27'-linked polyubiquitination of AR/androgen receptor thereby modulating its transcriptional activity. May also bind DNA and function as a transcriptional regulator. Mediates polyubiquitination of QKI in macrophages, leading to its degradation. The chain is E3 ubiquitin-protein ligase RNF6 from Mus musculus (Mouse).